Here is a 1072-residue protein sequence, read N- to C-terminus: DNA-directed RNA polymerase subunit beta (1072 aa).

This sequence belongs to the RNA polymerase beta chain family. In terms of assembly, in plastids the minimal PEP RNA polymerase catalytic core is composed of four subunits: alpha, beta, beta', and beta''. When a (nuclear-encoded) sigma factor is associated with the core the holoenzyme is formed, which can initiate transcription.

The protein localises to the plastid. The protein resides in the chloroplast. It catalyses the reaction RNA(n) + a ribonucleoside 5'-triphosphate = RNA(n+1) + diphosphate. In terms of biological role, DNA-dependent RNA polymerase catalyzes the transcription of DNA into RNA using the four ribonucleoside triphosphates as substrates. In Oenothera elata subsp. hookeri (Hooker's evening primrose), this protein is DNA-directed RNA polymerase subunit beta.